The following is a 281-amino-acid chain: Cell division protein DivIB (281 aa).

The segment at 1 to 36 (MARKRITRRDPEEELSKFLRHEPGQGQETRKLSSQL) is disordered. The Cytoplasmic segment spans residues 1–46 (MARKRITRRDPEEELSKFLRHEPGQGQETRKLSSQLTSLKKERRRG). The span at 8–31 (RRDPEEELSKFLRHEPGQGQETRK) shows a compositional bias: basic and acidic residues. Residues 47–69 (LLTRLGSIMAVCLLAIAFLTYYV) traverse the membrane as a helical segment. Residues 70 to 281 (SPLADVSTVR…SAEKKAYGLS (212 aa)) are Extracellular-facing. A POTRA domain is found at 73-144 (ADVSTVRVLG…NTLNMQVHER (72 aa)).

This sequence belongs to the FtsQ/DivIB family. DivIB subfamily.

It localises to the cell membrane. Cell division protein that may be involved in stabilizing or promoting the assembly of the division complex. The sequence is that of Cell division protein DivIB from Lactobacillus delbrueckii subsp. bulgaricus (strain ATCC 11842 / DSM 20081 / BCRC 10696 / JCM 1002 / NBRC 13953 / NCIMB 11778 / NCTC 12712 / WDCM 00102 / Lb 14).